Reading from the N-terminus, the 1078-residue chain is MINAKKMLGDGKEGTSTIPGFNQIQFEGFYRFIDQGLIEELSKFPKIEDIDHEIEFQLFVETYQLVEPLIKERDAVYESLTYSSELYVSAGLIWKTNRNMQEQRIFIGNIPLMNSLGTSIVNGIYRVVINQILQSPGIYYQSELDHNGISVYTGTIISDWGGRLELEIDKKARIWARVSRKQKISILVLSSAMGSNLREILENVCYPEIFLSFLTDKEKKKIGSKENAILEFYQQFSCVGGDPIFSESLCKELQKKFFHQRCELGRIGRRNINWRLNLNIPQNNIFLLPRDILAAADHLIGMKFGMGTLDDMNHLKNKRIRSVADLLQDQLGLALARLENVVKGTIGGAIRHKLIPPTQNLVTSTPLTTTYESFFGFHPLSQVLDRTNPLTQIVHGRKLSYLGPGGLTGRTANFRIRDIHPSHYGRICPIDTSEGINVGLIGSLSIHARIGDWGSLESPFYELVEKSKKAQIRMLFLSPSQDEYYMIAAGNSLALNRGIQEEQVVPARYRQEFLTIAWEEVHLRSIFPFQYFSIGASLIPFIEHNDANRALMSSNMQRQAVPLSRSEKCIVGTGLERQVALDSGVPAIAEHEGKILYTDTEKIILSGNENTLSIPLIMYQRSNKNTCMHQKPQVPRGKCIKKGQILADGAATVGGELALGKNVLVAYMPWEGYNFEDAVLISECLVYGDIYTSFHIRKYEIQTHVTTQGPERITKEIPHLEGRLLRNLDKNGIVMLGSWVETGDILVGKLTPQVAKESSYAPEDRLLRAILGIQVSTSKETCLKLPIGGRGRVIDVRWVQKKGGSSYNPEIIRVYISQKREIKVGDKVAGRHGNKGIISKILPRQDMPYLQDGRPVDMVFNPLGVPSRMNVGQIFECSLGLAGSLLDRHYRIAPFDERYEQEASRKLVFSELYEASKQTANPWVFEPEYPGKSRIFDGRTGDPFEQPVIIGKPYILKLIHQVDDKIHGRSSGHYALVTQQPLRGRSKQGGQRVGEMEVWALEGFGVAHILQEMLTYKSDHIRARQEVLGTTIIGGTIPKPEDAPESFRLLVRELRSLALELNHFLVSEKNFQINRKEV.

This sequence belongs to the RNA polymerase beta chain family. The minimal PEP RNA polymerase found in etioplasts (PEP-B) is composed of four subunits: alpha, beta, beta', and beta''. Following differentiation into chloroplasts the PEP-A RNA polymerase in this organism has been shown to be composed of at least 13 subunits, including the PEP-B subunits. When a (nuclear-encoded) sigma factor is associated with the core the holoenzyme is formed, which can initiate transcription.

The protein resides in the plastid. The protein localises to the chloroplast. The catalysed reaction is RNA(n) + a ribonucleoside 5'-triphosphate = RNA(n+1) + diphosphate. In terms of biological role, DNA-dependent RNA polymerase catalyzes the transcription of DNA into RNA using the four ribonucleoside triphosphates as substrates. The polypeptide is DNA-directed RNA polymerase subunit beta (rpoB) (Sinapis alba (White mustard)).